The sequence spans 418 residues: Serine hydroxymethyltransferase (418 aa).

Residues L121 and 125–127 (GHL) contribute to the (6S)-5,6,7,8-tetrahydrofolate site. N6-(pyridoxal phosphate)lysine is present on K230. 356 to 358 (SPF) lines the (6S)-5,6,7,8-tetrahydrofolate pocket.

Belongs to the SHMT family. As to quaternary structure, homodimer. Requires pyridoxal 5'-phosphate as cofactor.

The protein resides in the cytoplasm. The catalysed reaction is (6R)-5,10-methylene-5,6,7,8-tetrahydrofolate + glycine + H2O = (6S)-5,6,7,8-tetrahydrofolate + L-serine. It functions in the pathway one-carbon metabolism; tetrahydrofolate interconversion. It participates in amino-acid biosynthesis; glycine biosynthesis; glycine from L-serine: step 1/1. Catalyzes the reversible interconversion of serine and glycine with tetrahydrofolate (THF) serving as the one-carbon carrier. This reaction serves as the major source of one-carbon groups required for the biosynthesis of purines, thymidylate, methionine, and other important biomolecules. Also exhibits THF-independent aldolase activity toward beta-hydroxyamino acids, producing glycine and aldehydes, via a retro-aldol mechanism. The polypeptide is Serine hydroxymethyltransferase (Alteromonas mediterranea (strain DSM 17117 / CIP 110805 / LMG 28347 / Deep ecotype)).